Here is a 371-residue protein sequence, read N- to C-terminus: Chaperone protein DnaJ (371 aa).

The J domain occupies 5 to 69 (DYYEILGIAK…QKRAAYDQHG (65 aa)). The CR-type zinc-finger motif lies at 127–205 (GASKEIHITT…CRGQGKVEEP (79 aa)). Positions 140, 143, 157, 160, 179, 182, 193, and 196 each coordinate Zn(2+). CXXCXGXG motif repeat units follow at residues 140–147 (CEHCKGSG), 157–164 (CTTCRGVG), 179–186 (CPRCHGQG), and 193–200 (CRQCRGQG).

It belongs to the DnaJ family. In terms of assembly, homodimer. Requires Zn(2+) as cofactor.

The protein localises to the cytoplasm. Functionally, participates actively in the response to hyperosmotic and heat shock by preventing the aggregation of stress-denatured proteins and by disaggregating proteins, also in an autonomous, DnaK-independent fashion. Unfolded proteins bind initially to DnaJ; upon interaction with the DnaJ-bound protein, DnaK hydrolyzes its bound ATP, resulting in the formation of a stable complex. GrpE releases ADP from DnaK; ATP binding to DnaK triggers the release of the substrate protein, thus completing the reaction cycle. Several rounds of ATP-dependent interactions between DnaJ, DnaK and GrpE are required for fully efficient folding. Also involved, together with DnaK and GrpE, in the DNA replication of plasmids through activation of initiation proteins. The sequence is that of Chaperone protein DnaJ from Hamiltonella defensa subsp. Acyrthosiphon pisum (strain 5AT).